The chain runs to 536 residues: Prickle planar cell polarity protein 3-B (536 aa).

One can recognise a PET domain in the interval 66 to 175 (SGSQRDSLCD…CVRPISGTMS (110 aa)). 3 LIM zinc-binding domains span residues 177–241 (TVCQ…ELKR), 242–302 (PRCL…LYAQ), and 305–366 (DSCG…HTKS). The interval 418–536 (PTQAAPARSL…KKKDKSCFLS (119 aa)) is disordered. A compositionally biased stretch (basic and acidic residues) spans 438–448 (FSRECPNRRSL). Polar residues predominate over residues 450 to 467 (DLSSHTRTPTRVTFQLPS). Positions 474–487 (SISFSRPSFTSSSS) are enriched in low complexity.

Belongs to the prickle / espinas / testin family. In terms of assembly, interacts with vangl2 via its C-terminus. The vangl2-dependent membrane recruitment of prickle3 is a prerequisite for its polarization. Interacts with wtip. Wtip is involved in the recruitment of prickle3 to the basal body.

It is found in the cytoplasm. Its subcellular location is the cell membrane. It localises to the mitochondrion. In terms of biological role, involved in the planar cell polarity (PCP) pathway that is essential for the polarization of epithelial cells during morphogenetic processes, including gastrulation and neurulation. PCP is maintained by two molecular modules, the global and the core modules. Proteins of the core module include the proteins Frizzled (Fz), Disheveled (Dsh), Van Gogh (Vang), Prickle (Pk), Flamingo (Fmi, Celsr) and Diego (Dgo). The core module proteins develop subcellular asymmetry, accumulating in two groups on opposite sides of epithelial cells. Distinct proximal (Vang, Pk and Fmi) and distal (Fz, Dsh, Dgo and Fmi) complexes segregate to opposite sides of the cell, where they interact with the opposite complex in the neighboring cell at or near the adherents junctions. Directional information to orient polarization with respect to the tissue axes is provided by the global module which involves Wnt proteins. Involved in the organization of the basal body. Involved in cilia growth and positioning. Required for proper assembly, stability, and function of mitochondrial membrane ATP synthase (mitochondrial complex V). This Xenopus laevis (African clawed frog) protein is Prickle planar cell polarity protein 3-B (prickle3-b).